The chain runs to 1153 residues: PPi-type phosphoenolpyruvate carboxykinase 3 (1153 aa).

The stretch at 1085–1131 (RQKLEVAKLNKDLAYLNKTIAEKPRLAETLNKQIAAVKEELQYVSSE) forms a coiled coil.

Belongs to the PPi-type phosphoenolpyruvate carboxykinase family. As to quaternary structure, monomer and trimer; forms heterotrimers with PEPCK1 and PEPCK2.

The protein localises to the cytoplasm. It localises to the cytosol. The enzyme catalyses oxaloacetate + diphosphate = phosphoenolpyruvate + phosphate + CO2. Its function is as follows. Inorganic pyrophosphate (PPi)-dependent phosphoenolpyruvate carboxykinase, which regulates the carbon flow of the central metabolism by fixing CO(2) to phosphoenolpyruvate to produce oxaloacetate. Can also produce pyruvate and diphosphate from phosphoenolpyruvate and phosphate. This chain is PPi-type phosphoenolpyruvate carboxykinase 3, found in Entamoeba histolytica (strain ATCC 30459 / HM-1:IMSS / ABRM).